The primary structure comprises 423 residues: Glucose-1-phosphate adenylyltransferase (423 aa).

Alpha-D-glucose 1-phosphate is bound by residues Tyr-110, Gly-175, Glu-190 to Lys-191, and Ser-208.

Belongs to the bacterial/plant glucose-1-phosphate adenylyltransferase family. As to quaternary structure, homotetramer.

The enzyme catalyses alpha-D-glucose 1-phosphate + ATP + H(+) = ADP-alpha-D-glucose + diphosphate. Its pathway is glycan biosynthesis; glycogen biosynthesis. Functionally, involved in the biosynthesis of ADP-glucose, a building block required for the elongation reactions to produce glycogen. Catalyzes the reaction between ATP and alpha-D-glucose 1-phosphate (G1P) to produce pyrophosphate and ADP-Glc. This chain is Glucose-1-phosphate adenylyltransferase, found in Nitrosococcus oceani (strain ATCC 19707 / BCRC 17464 / JCM 30415 / NCIMB 11848 / C-107).